A 110-amino-acid chain; its full sequence is Nucleoid-associated protein Sfri_2406 (110 aa).

This sequence belongs to the YbaB/EbfC family. In terms of assembly, homodimer.

The protein resides in the cytoplasm. The protein localises to the nucleoid. In terms of biological role, binds to DNA and alters its conformation. May be involved in regulation of gene expression, nucleoid organization and DNA protection. In Shewanella frigidimarina (strain NCIMB 400), this protein is Nucleoid-associated protein Sfri_2406.